Here is a 39-residue protein sequence, read N- to C-terminus: Photosystem II reaction center protein L (39 aa).

A helical membrane pass occupies residues 18–38; the sequence is SLYLGVLSVLVLGILFSSYFF.

This sequence belongs to the PsbL family. As to quaternary structure, PSII is composed of 1 copy each of membrane proteins PsbA, PsbB, PsbC, PsbD, PsbE, PsbF, PsbH, PsbI, PsbJ, PsbK, PsbL, PsbM, PsbT, PsbX, PsbY, Psb30/Ycf12, peripheral proteins PsbO, CyanoQ (PsbQ), PsbU, PsbV and a large number of cofactors. It forms dimeric complexes.

Its subcellular location is the cellular thylakoid membrane. Functionally, one of the components of the core complex of photosystem II (PSII). PSII is a light-driven water:plastoquinone oxidoreductase that uses light energy to abstract electrons from H(2)O, generating O(2) and a proton gradient subsequently used for ATP formation. It consists of a core antenna complex that captures photons, and an electron transfer chain that converts photonic excitation into a charge separation. This subunit is found at the monomer-monomer interface and is required for correct PSII assembly and/or dimerization. This chain is Photosystem II reaction center protein L, found in Prochlorococcus marinus (strain MIT 9515).